We begin with the raw amino-acid sequence, 260 residues long: Triosephosphate isomerase (260 aa).

Position 11-13 (11-13 (NWK)) interacts with substrate. Histidine 103 acts as the Electrophile in catalysis. Catalysis depends on glutamate 175, which acts as the Proton acceptor. Substrate-binding positions include glycine 181, serine 220, and 241-242 (GG).

Belongs to the triosephosphate isomerase family. Homodimer.

The protein resides in the cytoplasm. It catalyses the reaction D-glyceraldehyde 3-phosphate = dihydroxyacetone phosphate. Its pathway is carbohydrate biosynthesis; gluconeogenesis. It functions in the pathway carbohydrate degradation; glycolysis; D-glyceraldehyde 3-phosphate from glycerone phosphate: step 1/1. In terms of biological role, involved in the gluconeogenesis. Catalyzes stereospecifically the conversion of dihydroxyacetone phosphate (DHAP) to D-glyceraldehyde-3-phosphate (G3P). The sequence is that of Triosephosphate isomerase from Shewanella sp. (strain W3-18-1).